A 510-amino-acid polypeptide reads, in one-letter code: Dermokine (510 aa).

Residues 1–21 form the signal peptide; it reads MKLKGSLACLLLFLLLGSGEA. Residues 117–362 form a disordered region; it reads VDPAHKSWQG…SSGEGEAVSG (246 aa). Residues 124-137 are compositionally biased toward polar residues; the sequence is WQGTPGSNGAWGTN. Over residues 141-158 the composition is skewed to gly residues; the sequence is PSGGHGIPGSQGSSGGPG. The segment covering 194–221 has biased composition (polar residues); the sequence is GANSQGTSPQPGSVRSNNNRNTECTTPP. 3 stretches are compositionally biased toward gly residues: residues 222 to 231, 240 to 254, and 264 to 292; these read GSGGSSGNSG, TNGG…GGSN, and SNGG…GGSN. Composition is skewed to low complexity over residues 293-303 and 319-332; these read AGSSGSSGSSS and PSPS…SGVR. The segment covering 344 to 355 has biased composition (gly residues); the sequence is GGSGGQGQGSSG.

It belongs to the dermokine family. As to quaternary structure, homooligomer. Seems to be able to homodimerize and homotrimerize. In terms of processing, O-glycosylated.

It is found in the secreted. May act as a soluble regulator of keratinocyte differentiation. This Bos taurus (Bovine) protein is Dermokine (DMKN).